A 330-amino-acid chain; its full sequence is 4-hydroxythreonine-4-phosphate dehydrogenase (330 aa).

Substrate is bound by residues His136 and Thr137. 3 residues coordinate a divalent metal cation: His166, His211, and His266. The substrate site is built by Lys274, Asn283, and Arg292.

Belongs to the PdxA family. As to quaternary structure, homodimer. Requires Zn(2+) as cofactor. It depends on Mg(2+) as a cofactor. Co(2+) is required as a cofactor.

It localises to the cytoplasm. The catalysed reaction is 4-(phosphooxy)-L-threonine + NAD(+) = 3-amino-2-oxopropyl phosphate + CO2 + NADH. The protein operates within cofactor biosynthesis; pyridoxine 5'-phosphate biosynthesis; pyridoxine 5'-phosphate from D-erythrose 4-phosphate: step 4/5. Functionally, catalyzes the NAD(P)-dependent oxidation of 4-(phosphooxy)-L-threonine (HTP) into 2-amino-3-oxo-4-(phosphooxy)butyric acid which spontaneously decarboxylates to form 3-amino-2-oxopropyl phosphate (AHAP). This Sodalis glossinidius (strain morsitans) protein is 4-hydroxythreonine-4-phosphate dehydrogenase.